Consider the following 463-residue polypeptide: Myocyte-specific enhancer factor 2C (463 aa).

The region spanning 3 to 57 (RKKIQITRIMDERNRQVTFTKRKFGLMKKAYELSVLCDCEIALIIFNSTNKLFQY) is the MADS-box domain. Lysine 4 is modified (N6-acetyllysine). The mef2-type DNA-binding region spans 58–86 (ASTDMDKVLLKYTEYNEPHESRTNSDIVE). Position 59 is a phosphoserine; by CK2 (serine 59). Serine 98 and serine 104 each carry phosphoserine. An N6-acetyllysine mark is found at lysine 114 and lysine 117. A disordered region spans residues 178–223 (NSMSPGVTHRPPSAGNTGGLMGGDLTSGAGTSAGNGYGNPRNSPGL). Phosphoserine occurs at positions 220 and 226. An N6-acetyllysine mark is found at lysine 232 and lysine 237. Serine 238 carries the phosphoserine modification. N6-acetyllysine occurs at positions 250 and 262. A phosphothreonine; by MAPK7 and MAPK14 mark is found at threonine 283 and threonine 290. Positions 358 to 389 (ACTSTHLSQSSNLSLPSTQSLNIKSEPVSPPR) are transcription repressor. Positions 365 to 380 (SQSSNLSLPSTQSLNI) are enriched in polar residues. Residues 365–463 (SQSSNLSLPS…RMRLSEGWAT (99 aa)) are disordered. Lysine 381 participates in a covalent cross-link: Glycyl lysine isopeptide (Lys-Gly) (interchain with G-Cter in SUMO). Phosphoserine; by CDK5 is present on serine 386. A Phosphoserine; by MAPK7 modification is found at serine 409. Over residues 409-422 (SPVDSLSSCSSSYD) the composition is skewed to low complexity. Over residues 423-433 (GSDREDHRNEF) the composition is skewed to basic and acidic residues. Serine 435 is modified (phosphoserine).

As to quaternary structure, forms a complex with class II HDACs in undifferentiating cells. On myogenic differentiation, HDACs are released into the cytoplasm allowing MEF2s to interact with other proteins for activation. Interacts with EP300 in differentiating cells; the interaction acetylates MEF2C leading to increased DNA binding and activation. Interacts with HDAC7 and CARM1. Interacts with HDAC4, HDAC7 and HDAC9; the interaction with HDACs represses transcriptional activity. Interacts with LPIN1. Interacts with MYOCD. Interacts with AKAP13. Interacts with FOXK1; the interaction inhibits MEF2C transactivation activity. Interacts (via N-terminus) with HABP4; this interaction decreases DNA-binding activity of MEF2C in myocardial cells in response to mechanical stress. Interacts with JPH2; interaction specifically takes place with the Junctophilin-2 N-terminal fragment cleavage product of JPH2. Interacts (via MADS box) with SOX18. Interacts with PHF7; the interaction promotes MEF2C binding to its transcription targets. Phosphorylated on Ser-59; which enhances DNA binding activity. Phosphorylated on Ser-386; which is required for Lys-381 sumoylation and inhibits transcriptional activity. In terms of processing, acetylated by p300 on several sites in diffentiating myocytes. Acetylation on Lys-4 increases DNA binding and transactivation. Post-translationally, sumoylated on Lys-381 with SUMO2 but not SUMO1; which represses transcriptional activity. Proteolytically cleaved in cerebellar granule neurons on several sites by caspase 3 and caspase 7 following neurotoxicity. Preferentially cleaves the CDK5-mediated hyperphosphorylated form which leads to neuron apoptosis and transcriptional inactivation.

The protein resides in the nucleus. The protein localises to the cytoplasm. It localises to the sarcoplasm. Transcription activator which binds specifically to the MEF2 element present in the regulatory regions of many muscle-specific genes. Controls cardiac morphogenesis and myogenesis, and is also involved in vascular development. Enhances transcriptional activation mediated by SOX18. Plays an essential role in hippocampal-dependent learning and memory by suppressing the number of excitatory synapses and thus regulating basal and evoked synaptic transmission. Crucial for normal neuronal development, distribution, and electrical activity in the neocortex. Necessary for proper development of megakaryocytes and platelets and for bone marrow B-lymphopoiesis. Required for B-cell survival and proliferation in response to BCR stimulation, efficient IgG1 antibody responses to T-cell-dependent antigens and for normal induction of germinal center B-cells. May also be involved in neurogenesis and in the development of cortical architecture. The sequence is that of Myocyte-specific enhancer factor 2C from Sus scrofa (Pig).